Consider the following 209-residue polypeptide: Large ribosomal subunit protein uL4 (209 aa).

A disordered region spans residues 45 to 78 (RQGTHKAKERAEVAGSTRKIKKQKGTGTARAGSA).

The protein belongs to the universal ribosomal protein uL4 family. In terms of assembly, part of the 50S ribosomal subunit.

One of the primary rRNA binding proteins, this protein initially binds near the 5'-end of the 23S rRNA. It is important during the early stages of 50S assembly. It makes multiple contacts with different domains of the 23S rRNA in the assembled 50S subunit and ribosome. Functionally, forms part of the polypeptide exit tunnel. The protein is Large ribosomal subunit protein uL4 of Flavobacterium psychrophilum (strain ATCC 49511 / DSM 21280 / CIP 103535 / JIP02/86).